The following is a 1189-amino-acid chain: Lysine-specific demethylase hairless (1189 aa).

Disordered stretches follow at residues 1–40, 236–257, 349–377, 414–480, and 505–552; these read MEST…HHGP, HLQR…EMGA, EGGA…SHHT, AGSP…LQDP, and GEGG…RLST. Residues 239-254 show a composition bias toward basic and acidic residues; sequence RAGEAERPSLHQRDGE. A compositionally biased stretch (basic and acidic residues) spans 457 to 469; the sequence is KDVDSGQHDEQKG. The LXXLL motif 1 signature appears at 566–570; the sequence is LCRLL. The C6-type zinc finger occupies 600 to 625; that stretch reads CSRCHHGLFNTHWRCPRCSHRLCVAC. The segment at 702–750 is disordered; sequence GDAGQQKESTQKTPPTPQPSCNGDTHRTKSIKEETPDSAETPAEDRAGR. A compositionally biased stretch (basic and acidic residues) spans 725 to 736; sequence DTHRTKSIKEET. The short motif at 758 to 762 is the LXXLL motif 2 element; sequence LCELL. The 212-residue stretch at 946 to 1157 folds into the JmjC domain; the sequence is DTSRVENLAA…LSAQLCHQGP (212 aa). 3 residues coordinate Fe cation: Cys1007, Glu1009, and His1125.

Fe(2+) serves as cofactor. In terms of tissue distribution, strongest expression of isoforms 1 and 2 is seen in the small intestine, weaker expression in brain and colon, and trace expression is found in liver, pancreas, spleen, thymus, stomach, salivary gland, appendix and trachea. Isoform 1 is always the most abundant. Isoform 1 is exclusively expressed at low levels in kidney and testis. Isoform 2 is exclusively expressed at high levels in the skin.

Its subcellular location is the nucleus. It carries out the reaction N(6),N(6)-dimethyl-L-lysyl(9)-[histone H3] + 2 2-oxoglutarate + 2 O2 = L-lysyl(9)-[histone H3] + 2 formaldehyde + 2 succinate + 2 CO2. In terms of biological role, histone demethylase that specifically demethylates both mono- and dimethylated 'Lys-9' of histone H3. May act as a transcription regulator controlling hair biology (via targeting of collagens), neural activity, and cell cycle. In Homo sapiens (Human), this protein is Lysine-specific demethylase hairless (HR).